Reading from the N-terminus, the 350-residue chain is Holliday junction branch migration complex subunit RuvB (350 aa).

Residues 4-184 (ADRIVTASSR…FGIVQRLEFY (181 aa)) are large ATPase domain (RuvB-L). ATP is bound by residues I23, R24, G65, K68, T69, T70, 131–133 (EDF), R174, Y184, and R221. Residue T69 participates in Mg(2+) binding. The tract at residues 185–255 (STEDLATIVR…IADLALNMLD (71 aa)) is small ATPAse domain (RuvB-S). The segment at 258–350 (ERGFDHQDRR…TPDLFEGDIV (93 aa)) is head domain (RuvB-H). Positions 294, 313, and 318 each coordinate DNA.

Belongs to the RuvB family. As to quaternary structure, homohexamer. Forms an RuvA(8)-RuvB(12)-Holliday junction (HJ) complex. HJ DNA is sandwiched between 2 RuvA tetramers; dsDNA enters through RuvA and exits via RuvB. An RuvB hexamer assembles on each DNA strand where it exits the tetramer. Each RuvB hexamer is contacted by two RuvA subunits (via domain III) on 2 adjacent RuvB subunits; this complex drives branch migration. In the full resolvosome a probable DNA-RuvA(4)-RuvB(12)-RuvC(2) complex forms which resolves the HJ.

The protein resides in the cytoplasm. It carries out the reaction ATP + H2O = ADP + phosphate + H(+). Functionally, the RuvA-RuvB-RuvC complex processes Holliday junction (HJ) DNA during genetic recombination and DNA repair, while the RuvA-RuvB complex plays an important role in the rescue of blocked DNA replication forks via replication fork reversal (RFR). RuvA specifically binds to HJ cruciform DNA, conferring on it an open structure. The RuvB hexamer acts as an ATP-dependent pump, pulling dsDNA into and through the RuvAB complex. RuvB forms 2 homohexamers on either side of HJ DNA bound by 1 or 2 RuvA tetramers; 4 subunits per hexamer contact DNA at a time. Coordinated motions by a converter formed by DNA-disengaged RuvB subunits stimulates ATP hydrolysis and nucleotide exchange. Immobilization of the converter enables RuvB to convert the ATP-contained energy into a lever motion, pulling 2 nucleotides of DNA out of the RuvA tetramer per ATP hydrolyzed, thus driving DNA branch migration. The RuvB motors rotate together with the DNA substrate, which together with the progressing nucleotide cycle form the mechanistic basis for DNA recombination by continuous HJ branch migration. Branch migration allows RuvC to scan DNA until it finds its consensus sequence, where it cleaves and resolves cruciform DNA. This is Holliday junction branch migration complex subunit RuvB from Stutzerimonas stutzeri (strain A1501) (Pseudomonas stutzeri).